The following is a 434-amino-acid chain: Trigger factor (434 aa).

Positions 161-246 (EDRATIDFTG…LKKVEERELP (86 aa)) constitute a PPIase FKBP-type domain.

This sequence belongs to the FKBP-type PPIase family. Tig subfamily.

The protein localises to the cytoplasm. The catalysed reaction is [protein]-peptidylproline (omega=180) = [protein]-peptidylproline (omega=0). In terms of biological role, involved in protein export. Acts as a chaperone by maintaining the newly synthesized protein in an open conformation. Functions as a peptidyl-prolyl cis-trans isomerase. This is Trigger factor from Pectobacterium atrosepticum (strain SCRI 1043 / ATCC BAA-672) (Erwinia carotovora subsp. atroseptica).